We begin with the raw amino-acid sequence, 374 residues long: Transaldolase (374 aa).

The active-site Schiff-base intermediate with substrate is the lysine 140.

This sequence belongs to the transaldolase family. Type 2 subfamily.

It localises to the cytoplasm. The catalysed reaction is D-sedoheptulose 7-phosphate + D-glyceraldehyde 3-phosphate = D-erythrose 4-phosphate + beta-D-fructose 6-phosphate. It functions in the pathway carbohydrate degradation; pentose phosphate pathway; D-glyceraldehyde 3-phosphate and beta-D-fructose 6-phosphate from D-ribose 5-phosphate and D-xylulose 5-phosphate (non-oxidative stage): step 2/3. Transaldolase is important for the balance of metabolites in the pentose-phosphate pathway. The sequence is that of Transaldolase from Renibacterium salmoninarum (strain ATCC 33209 / DSM 20767 / JCM 11484 / NBRC 15589 / NCIMB 2235).